The chain runs to 811 residues: tRNA(Met) cytidine acetyltransferase TmcA (811 aa).

ATP is bound by residues glutamine 267 and arginine 439. One can recognise an N-acetyltransferase domain in the interval 473 to 662; it reads KKEVYLEEPD…GEFTAIVLKP (190 aa). Acetyl-CoA contacts are provided by residues 589 to 591, glutamate 629, and arginine 636; that span reads IAT.

Belongs to the TmcA family.

Its subcellular location is the cytoplasm. The catalysed reaction is cytidine(34) in elongator tRNA(Met) + acetyl-CoA + ATP + H2O = N(4)-acetylcytidine(34) in elongator tRNA(Met) + ADP + phosphate + CoA + H(+). It catalyses the reaction a cytidine in RNA + acetyl-CoA + ATP + H2O = an N(4)-acetylcytidine in RNA + ADP + phosphate + CoA + H(+). The enzyme catalyses a cytidine in tRNA + acetyl-CoA + ATP + H2O = an N(4)-acetylcytidine in tRNA + ADP + phosphate + CoA + H(+). It carries out the reaction a cytidine in mRNA + acetyl-CoA + ATP + H2O = an N(4)-acetylcytidine in mRNA + ADP + phosphate + CoA + H(+). Functionally, catalyzes the formation of N(4)-acetylcytidine (ac(4)C) at the wobble position of tRNA(Met), by using acetyl-CoA as an acetyl donor and ATP (or GTP). Its function is as follows. Catalyzes the formation of 267 N(4)-acetylcytidine (ac(4)C) sites in RNA, almost always on the middle C of a CCG motif. Modifications are found in rRNA, ncRNA, mRNA and tRNA. More acetylation is observed at 95 than at 75 or 85 degrees Celsius. This is tRNA(Met) cytidine acetyltransferase TmcA from Thermococcus sp. (strain AM4).